A 105-amino-acid polypeptide reads, in one-letter code: MVSMTSDRIRIKLKAYDYRILDKAVTEIVDTARNTGAAIAGPIPLPTQISRTTIQRSVHVDKKSREQFEMRIHKRLLDILEPTQQTVDALGKLSLPAGVDVEIKL.

Belongs to the universal ribosomal protein uS10 family. Part of the 30S ribosomal subunit.

In terms of biological role, involved in the binding of tRNA to the ribosomes. This Maridesulfovibrio salexigens (strain ATCC 14822 / DSM 2638 / NCIMB 8403 / VKM B-1763) (Desulfovibrio salexigens) protein is Small ribosomal subunit protein uS10.